A 218-amino-acid polypeptide reads, in one-letter code: GTP cyclohydrolase 1 (218 aa).

3 residues coordinate Zn(2+): Cys109, His112, and Cys180.

The protein belongs to the GTP cyclohydrolase I family. Toroid-shaped homodecamer, composed of two pentamers of five dimers.

It catalyses the reaction GTP + H2O = 7,8-dihydroneopterin 3'-triphosphate + formate + H(+). Its pathway is cofactor biosynthesis; 7,8-dihydroneopterin triphosphate biosynthesis; 7,8-dihydroneopterin triphosphate from GTP: step 1/1. This Haemophilus influenzae (strain 86-028NP) protein is GTP cyclohydrolase 1.